Here is a 417-residue protein sequence, read N- to C-terminus: Gamma-glutamyl phosphate reductase (417 aa).

The protein belongs to the gamma-glutamyl phosphate reductase family.

It is found in the cytoplasm. It catalyses the reaction L-glutamate 5-semialdehyde + phosphate + NADP(+) = L-glutamyl 5-phosphate + NADPH + H(+). The protein operates within amino-acid biosynthesis; L-proline biosynthesis; L-glutamate 5-semialdehyde from L-glutamate: step 2/2. Functionally, catalyzes the NADPH-dependent reduction of L-glutamate 5-phosphate into L-glutamate 5-semialdehyde and phosphate. The product spontaneously undergoes cyclization to form 1-pyrroline-5-carboxylate. The protein is Gamma-glutamyl phosphate reductase of Klebsiella pneumoniae subsp. pneumoniae (strain ATCC 700721 / MGH 78578).